The sequence spans 382 residues: Mating-type protein a-1 (382 aa).

Positions 116-184 (IPRPPNAYIL…RLLLENPDYR (69 aa)) form a DNA-binding region, HMG box.

Binds in vitro to DNA containing a specific core sequence 5'-CTTTG-3'.

The protein localises to the nucleus. Its function is as follows. Mating type proteins are sequence specific DNA-binding proteins that act as master switches in yeast differentiation by controlling gene expression in a cell type-specific fashion. Transcriptional activator that induces the transcription of a-specific genes like mating factor mfa-1. Required for mating as an a-cell, blocking of heterokaryon formation (vegetative incompatibility) and for perithecium induction. The chain is Mating-type protein a-1 (mta-1) from Neurospora crassa.